The following is a 362-amino-acid chain: Serpentine receptor class delta-2 (362 aa).

The next 7 helical transmembrane spans lie at 27 to 47 (LSCLICLPGALCNAILIYLIW), 57 to 77 (YAIYILNFALFDFATCIISFF), 104 to 124 (FCYFCHCFMCHALAHSQWILL), 144 to 164 (LIRNSVALYSMSLCFLLVYVF), 209 to 229 (LISILYMTIPCVPIYCAILYF), 264 to 284 (GIPIFWLVASGIFTMSQFGII), and 292 to 312 (ITFRLMDCIPLISPIVTIIFV).

Belongs to the nematode receptor-like protein srd family.

Its subcellular location is the membrane. In terms of biological role, thought to be a chemosensory receptor. The sequence is that of Serpentine receptor class delta-2 (srd-2) from Caenorhabditis elegans.